Reading from the N-terminus, the 613-residue chain is Dihydroxy-acid dehydratase (613 aa).

Residue aspartate 81 participates in Mg(2+) binding. Residue cysteine 122 participates in [2Fe-2S] cluster binding. Residues aspartate 123 and lysine 124 each coordinate Mg(2+). Lysine 124 bears the N6-carboxylysine mark. Cysteine 195 serves as a coordination point for [2Fe-2S] cluster. Glutamate 491 contacts Mg(2+). Serine 517 (proton acceptor) is an active-site residue.

This sequence belongs to the IlvD/Edd family. As to quaternary structure, homodimer. [2Fe-2S] cluster serves as cofactor. Mg(2+) is required as a cofactor.

The enzyme catalyses (2R)-2,3-dihydroxy-3-methylbutanoate = 3-methyl-2-oxobutanoate + H2O. It catalyses the reaction (2R,3R)-2,3-dihydroxy-3-methylpentanoate = (S)-3-methyl-2-oxopentanoate + H2O. Its pathway is amino-acid biosynthesis; L-isoleucine biosynthesis; L-isoleucine from 2-oxobutanoate: step 3/4. It functions in the pathway amino-acid biosynthesis; L-valine biosynthesis; L-valine from pyruvate: step 3/4. Its function is as follows. Functions in the biosynthesis of branched-chain amino acids. Catalyzes the dehydration of (2R,3R)-2,3-dihydroxy-3-methylpentanoate (2,3-dihydroxy-3-methylvalerate) into 2-oxo-3-methylpentanoate (2-oxo-3-methylvalerate) and of (2R)-2,3-dihydroxy-3-methylbutanoate (2,3-dihydroxyisovalerate) into 2-oxo-3-methylbutanoate (2-oxoisovalerate), the penultimate precursor to L-isoleucine and L-valine, respectively. The protein is Dihydroxy-acid dehydratase of Photobacterium profundum (strain SS9).